The sequence spans 41 residues: uncharacterized protein (41 aa).

This is an uncharacterized protein from Rickettsia prowazekii (strain Madrid E).